The sequence spans 291 residues: Nucleotide-binding protein lin2617 (291 aa).

An ATP-binding site is contributed by 13–20 (GMSGAGKT). 63-66 (DLRG) is a GTP binding site.

Belongs to the RapZ-like family.

Its function is as follows. Displays ATPase and GTPase activities. This is Nucleotide-binding protein lin2617 from Listeria innocua serovar 6a (strain ATCC BAA-680 / CLIP 11262).